Reading from the N-terminus, the 74-residue chain is Small integral membrane protein 15 (74 aa).

A helical transmembrane segment spans residues 20–40; that stretch reads YGFLTTVILVLTPLFIISAAL. Residues 48-74 are a coiled coil; that stretch reads IETREREQKKKRKRQENIVKAKRAKKD. The segment at 53-74 is disordered; it reads REQKKKRKRQENIVKAKRAKKD. The span at 56 to 74 shows a compositional bias: basic residues; it reads KKKRKRQENIVKAKRAKKD.

This sequence belongs to the SMIM15 family.

The protein resides in the membrane. This chain is Small integral membrane protein 15 (SMIM15), found in Gallus gallus (Chicken).